The following is a 2767-amino-acid chain: Serine/threonine-protein kinase ATM (2767 aa).

An FAT domain is found at 1713–2317; sequence NVVMASNHCQ…FYQLYPLVFA (605 aa). The region spanning 2419–2734 is the PI3K/PI4K catalytic domain; it reads WTNETTQCGG…KLDGREAGTM (316 aa). Residues 2425–2431 are G-loop; sequence QCGGLNA. The tract at residues 2601 to 2609 is catalytic loop; the sequence is GLGDRHTQN. Residues 2621–2645 form an activation loop region; it reads HIDFGIAFEQGKIQTTPETVPFRLT. Residues 2735–2767 form the FATC domain; that stretch reads GDSNVEAQVERLINEATLPSNLCMLFPGWDPHL.

The protein belongs to the PI3/PI4-kinase family. ATM subfamily.

It localises to the nucleus. Its subcellular location is the chromosome. The protein localises to the telomere. The enzyme catalyses L-seryl-[protein] + ATP = O-phospho-L-seryl-[protein] + ADP + H(+). It carries out the reaction L-threonyl-[protein] + ATP = O-phospho-L-threonyl-[protein] + ADP + H(+). Serine/threonine-protein kinase which recognizes the substrate consensus sequence [ST]-Q. Required to suppress spontaneous apoptosis of proliferating cells during development, and for their proper differentiation. Required for female fertility. Protects telomeres from fusion, maybe by recruiting or maintaining chromatin-modifying complexes such as Su(var)205/HP1. May activate checkpoint signaling in response to DNA double-stranded breaks induced by low-dose ionizing radiation. May phosphorylate histone H2AV. The chain is Serine/threonine-protein kinase ATM (tefu) from Drosophila melanogaster (Fruit fly).